The chain runs to 733 residues: Tyrosine-protein kinase ptk (733 aa).

2 helical membrane passes run 19–39 (LFFSLIAQWKLIALCIILSLI) and 438–458 (LQILILSIFLGGFLGTLLALL). Residue 542–550 (GPAPEVGKS) coordinates ATP.

This sequence belongs to the etk/wzc family. Requires Mg(2+) as cofactor. Mn(2+) serves as cofactor. In terms of processing, autophosphorylated on several Tyr residues. Dephosphorylated by ptp.

It is found in the cell inner membrane. The catalysed reaction is L-tyrosyl-[protein] + ATP = O-phospho-L-tyrosyl-[protein] + ADP + H(+). Its pathway is glycan metabolism; exopolysaccharide biosynthesis. May be involved in the production and the transport of exopolysaccharides. The protein is Tyrosine-protein kinase ptk (ptk) of Acinetobacter johnsonii.